An 846-amino-acid chain; its full sequence is Iron-sulfur cluster assembly SufBD family protein Mb1496 (846 aa).

Positions 1–20 (MTLTPEASKSVAQPPTQAPL) are disordered. The DOD-type homing endonuclease domain occupies 388 to 528 (LAGYYLAEGH…LQSILARLGH (141 aa)).

Belongs to the iron-sulfur cluster assembly SufBD family. This protein undergoes a protein self splicing that involves a post-translational excision of the intervening region (intein) followed by peptide ligation.

This chain is Iron-sulfur cluster assembly SufBD family protein Mb1496, found in Mycobacterium bovis (strain ATCC BAA-935 / AF2122/97).